Reading from the N-terminus, the 231-residue chain is uncharacterized protein (231 aa).

The first 25 residues, 1-25, serve as a signal peptide directing secretion; the sequence is MAKWVPALLLRRVPLFSLRFRPASS. The Extracellular segment spans residues 26–200; it reads TFLPVLAATE…SRPSPSATLT (175 aa). Positions 39 to 64 are disordered; the sequence is SVPSGDLSMPVKTRAEGEDDGFGEAG. Residues 201–225 traverse the membrane as a helical segment; sequence LLLASSCLLAPAPPSFILLLFTLIA. Residues 226–231 lie on the Cytoplasmic side of the membrane; it reads PDLPHS.

The protein resides in the membrane. This is an uncharacterized protein from Homo sapiens (Human).